Consider the following 1733-residue polypeptide: MGQTVTTPLSLTLQHWGDVQRIASNQSVDVKKRRWVTFCSAEWPTFNVGWPQDGTFNLGVISQVKSRVFCPGPHGHPDQVPYIVTWEALAYDPPPWVKPFVSPKPPPLPTAPVLPPGPSAQPPSRSALYPALTPSIKSKPPKPQVLPDSGGPLIDLLTEDPPPYGAQPSSSARENNEEEAATTSEVSPPSPMVSRLRGRRDPPAADSTTSQAFPLRMGGDGQLQYWPFSSSDLYNWKNNNPSFSEDPGKLTALIESVLITHQPTWDDCQQLLGTLLTGEEKQRVLLEARKAVRGNDGRPTQLPNEVNAAFPLERPDWDYTTTEGRNHLVLYRQLLLAGLQNAGRSPTNLAKVKGITQGPNESPSAFLERLKEAYRRYTPYDPEDPGQETNVSMSFIWQSAPDIGRKLERLEDLKSKTLGDLVREAEKIFNKRETPEEREERIRREIEEKEERRRAEDEQRERERDRRRHREMSKLLATVVIGQRQDRQGGERRRPQLDKDQCAYCKEKGHWAKDCPKKPRGPRGPRPQTSLLTLGDXGGQGQEPPPEPRITLKVGGQPVTFLVDTGAQHSVLTQNPGPLSDKSAWVQGATGGKRYRWTTDRKVHLATGKVTHSFLHVPDCPYPLLGRDLLTKLKAQIHFEGSGAQVVGPMGQPLQVLTLNIEDEYRLHETSKEPDVPLGSTWLSDFPQAWAETGGMGLAVRQAPLIIPLKATSTPVSIKQYPMSQEARLGIKPHIQRLLDQGILVPCQSPWNTPLLPVKKPGTNDYRPVQDLREVNKRVEDIHPTVPNPYNLLSGLPPSHQWYTVLDLKDAFFCLRLHPTSQPLFAFEWRDPEMGISGQLTWTRLPQGFKNSPTLFDEALHRDLADFRIQHPDLILLQYVDDLLLAATSEQDCQRGTRALLQTLGNLGYRASAKKAQICQKQVKYLGYLLKEGQRWLTEARKETVMGQPTPKTPRQLREFLGTAGFCRLWIPGFAEMAAPLYPLTKTGTLFNWGPDQQKAYQEIKQALLTAPALGLPDLTKPFELFVDEKQGYAKGVLTQKLGPWRRPVAYLSKKLDPVAAGWPPCLRMVAAIAVLTKDAGKLTMGQPLVILAPHAVEALVKQPPDRWLSNARMTHYQAMLLDTDRVQFGPVVALNPATLLPLPEKEAPHDCLEILAETHGTRPDLTDQPIPDADYTWYTDGSSFLQEGQRRAGAAVTTETEVIWARALPAGTSAQRAELIALTQALKMAEGKKLNVYTDSRYAFATAHVHGEIYRRRGLLTSEGREIKNKNEILALLKALFLPKRLSIIHCPGHQKGNSAEARGNRMADQAAREAAMKAVLETSTLLIEDSTPYTPPHFHYTETDLKRLRELGATYNQTKGYWVLQGKPVMPDQSVFELLDSLHRLTHLSPQKMKALLDREESPYYMLNRDRTIQYVTETCTACAQVNASKAKIGAGVRVRGHRPGTHWEVDFTEVKPGLYGYKYLLVFVDTFSGWVEAFPTKRETAKVVSKKLLEDIFPRFGMPQVLGSDNGPAFASQVSQSVADLLGIDWKLHCAYRPQSSGQVERMNRTIKETLTKLTLASGTRDWVLLLPLALYRARNTPGPHGLTPYEILYGAPPPLVNFHDPEMSKLTNSPSLQAHLQALQAVQQEVWKPLAAAYQDQLDQPVIPHPFRVGDAVWVRRHQTKNLEPRWKGPYTVLLTTPTALKVDGISAWIHAAHVKAATTPPAGTAWKVQRSQNPLKIRLTRGAP.

A lipid anchor (N-myristoyl glycine; by host) is attached at glycine 2. Pro residues predominate over residues 108–121; the sequence is LPTAPVLPPGPSAQ. Disordered regions lie at residues 108–218, 449–469, and 511–550; these read LPTA…LRMG, KEER…RRRH, and WAKD…EPRI. A PTAP/PSAP motif motif is present at residues 109–112; the sequence is PTAP. The LYPX(n)L motif signature appears at 128–132; the sequence is LYPAL. The PPXY motif signature appears at 161 to 164; that stretch reads PPPY. Serine 190 carries the phosphoserine; by host modification. The stretch at 436–476 forms a coiled coil; the sequence is EEREERIRREIEEKEERRRAEDEQRERERDRRRHREMSKLL. Residues 449–464 show a composition bias toward basic and acidic residues; sequence KEERRRAEDEQRERER. A CCHC-type zinc finger spans residues 500 to 517; that stretch reads DQCAYCKEKGHWAKDCPK. Over residues 526 to 535 the composition is skewed to low complexity; that stretch reads RPQTSLLTLG. In terms of domain architecture, Peptidase A2 spans 559 to 629; sequence VTFLVDTGAQ…CPYPLLGRDL (71 aa). Aspartate 564 (protease; shared with dimeric partner) is an active-site residue. Tyrosine 721, aspartate 771, arginine 773, and proline 787 together coordinate RNA. The Reverse transcriptase domain maps to 739–930; that stretch reads LDQGILVPCQ…KQVKYLGYLL (192 aa). Aspartate 807 contacts Mg(2+). Asparagine 851 and proline 853 together coordinate RNA. Residues aspartate 881 and aspartate 882 each contribute to the Mg(2+) site. Arginine 941, arginine 955, arginine 958, and phenylalanine 966 together coordinate DNA. RNA contacts are provided by lysine 1054 and lysine 1055. Tryptophan 1063 provides a ligand contact to DNA. Lysine 1082 lines the RNA pocket. Arginine 1113 provides a ligand contact to DNA. Residues 1172–1318 enclose the RNase H type-1 domain; that stretch reads PDADYTWYTD…ADQAAREAAM (147 aa). Aspartate 1181 provides a ligand contact to Mg(2+). Positions 1184 and 1186 each coordinate RNA. Residues glutamine 1187, serine 1214, and glutamine 1216 each contribute to the DNA site. Glutamate 1219 and aspartate 1240 together coordinate Mg(2+). 2 residues coordinate RNA: arginine 1242 and arginine 1266. Mg(2+) contacts are provided by aspartate 1310, aspartate 1453, and aspartate 1512. An Integrase catalytic domain is found at 1442 to 1600; that stretch reads RGHRPGTHWE…TPYEILYGAP (159 aa).

Homohexamer. Further associates as homomultimer. The virus core is composed of a lattice formed from hexagonal rings, each containing six capsid monomers. In terms of assembly, homodimer. The protease is a homodimer, whose active site consists of two apposed aspartic acid residues. The reverse transcriptase is a monomer. It depends on Mg(2+) as a cofactor. Mn(2+) serves as cofactor. Post-translationally, specific enzymatic cleavages by the viral protease yield mature proteins. The protease is released by autocatalytic cleavage. The polyprotein is cleaved during and after budding, this process is termed maturation. In terms of processing, sumoylated. Required for virus replication. Phosphorylated on serine residues.

The protein localises to the host cell membrane. It localises to the virion. It carries out the reaction DNA(n) + a 2'-deoxyribonucleoside 5'-triphosphate = DNA(n+1) + diphosphate. The catalysed reaction is Endonucleolytic cleavage to 5'-phosphomonoester.. Its function is as follows. Plays a role in budding and is processed by the viral protease during virion maturation outside the cell. During budding, it recruits, in a PPXY-dependent or independent manner, Nedd4-like ubiquitin ligases that conjugate ubiquitin molecules to Gag, or to Gag binding host factors. Interaction with HECT ubiquitin ligases probably link the viral protein to the host ESCRT pathway and facilitate release. Targets Gag and gag-pol polyproteins to the plasma membrane via a multipartite membrane binding signal, that includes its myristoylated N-terminus. Also mediates nuclear localization of the pre-integration complex. In terms of biological role, forms the spherical core of the virion that encapsulates the genomic RNA-nucleocapsid complex. Functionally, involved in the packaging and encapsidation of two copies of the genome. Binds with high affinity to conserved UCUG elements within the packaging signal, located near the 5'-end of the genome. This binding is dependent on genome dimerization. Its function is as follows. The aspartyl protease mediates proteolytic cleavages of Gag and Gag-Pol polyproteins during or shortly after the release of the virion from the plasma membrane. Cleavages take place as an ordered, step-wise cascade to yield mature proteins. This process is called maturation. Displays maximal activity during the budding process just prior to particle release from the cell. Multifunctional enzyme that converts the viral dimeric RNA genome into dsDNA in the cytoplasm, shortly after virus entry into the cell. This enzyme displays a DNA polymerase activity that can copy either DNA or RNA templates, and a ribonuclease H (RNase H) activity that cleaves the RNA strand of RNA-DNA heteroduplexes in a partially processive 3' to 5' endonucleasic mode. Conversion of viral genomic RNA into dsDNA requires many steps. A tRNA binds to the primer-binding site (PBS) situated at the 5' end of the viral RNA. RT uses the 3' end of the tRNA primer to perform a short round of RNA-dependent minus-strand DNA synthesis. The reading proceeds through the U5 region and ends after the repeated (R) region which is present at both ends of viral RNA. The portion of the RNA-DNA heteroduplex is digested by the RNase H, resulting in a ssDNA product attached to the tRNA primer. This ssDNA/tRNA hybridizes with the identical R region situated at the 3' end of viral RNA. This template exchange, known as minus-strand DNA strong stop transfer, can be either intra- or intermolecular. RT uses the 3' end of this newly synthesized short ssDNA to perform the RNA-dependent minus-strand DNA synthesis of the whole template. RNase H digests the RNA template except for a polypurine tract (PPT) situated at the 5' end of the genome. It is not clear if both polymerase and RNase H activities are simultaneous. RNase H probably can proceed both in a polymerase-dependent (RNA cut into small fragments by the same RT performing DNA synthesis) and a polymerase-independent mode (cleavage of remaining RNA fragments by free RTs). Secondly, RT performs DNA-directed plus-strand DNA synthesis using the PPT that has not been removed by RNase H as primers. PPT and tRNA primers are then removed by RNase H. The 3' and 5' ssDNA PBS regions hybridize to form a circular dsDNA intermediate. Strand displacement synthesis by RT to the PBS and PPT ends produces a blunt ended, linear dsDNA copy of the viral genome that includes long terminal repeats (LTRs) at both ends. In terms of biological role, catalyzes viral DNA integration into the host chromosome, by performing a series of DNA cutting and joining reactions. This enzyme activity takes place after virion entry into a cell and reverse transcription of the RNA genome in dsDNA. The first step in the integration process is 3' processing. This step requires a complex comprising the viral genome, matrix protein and integrase. This complex is called the pre-integration complex (PIC). The integrase protein removes 2 nucleotides from each 3' end of the viral DNA, leaving recessed CA OH's at the 3' ends. In the second step that requires cell division, the PIC enters cell nucleus. In the third step, termed strand transfer, the integrase protein joins the previously processed 3' ends to the 5' ends of strands of target cellular DNA at the site of integration. The last step is viral DNA integration into host chromosome. The polypeptide is Gag-Pol polyprotein (gag-pol) (Homo sapiens (Human)).